The primary structure comprises 127 residues: Small ribosomal subunit protein eS8 (127 aa).

Residues 1-33 form a disordered region; that stretch reads MAIWQGKSMKKPSGGRAKMNRGKRKYELGREPA.

It belongs to the eukaryotic ribosomal protein eS8 family. Part of the 30S ribosomal subunit.

This Methanothermobacter thermautotrophicus (strain ATCC 29096 / DSM 1053 / JCM 10044 / NBRC 100330 / Delta H) (Methanobacterium thermoautotrophicum) protein is Small ribosomal subunit protein eS8 (rps8e).